Consider the following 290-residue polypeptide: MILKAYAKINLTLDVLSKRDDGYHEIRTIMQTVDLYDIINIEKIEEDSIIVTTSSENIPTDNKNHAYIAASLVKERFGVKEGVKIHIQKNIPISAGLAGGSTDAAAVLRGLNKLFGLNLSQNELIELGREIGADVPFCLVGGTALCEGIGEKVTKLKSAPKMNILIAKPEVYVSTQAVYEALDLSKVKKRPNTDAMIVAIEEGNIREIAKNLCNVLETVTVNQYPVINRVKDIMRNHNALGTVMTGSGPAVFGIFANKYDALKAADRLKVFIKEIILTTTCENEFFSNEE.

The active site involves lysine 8. 92-102 (PISAGLAGGST) is an ATP binding site. The active site involves aspartate 134.

This sequence belongs to the GHMP kinase family. IspE subfamily.

It catalyses the reaction 4-CDP-2-C-methyl-D-erythritol + ATP = 4-CDP-2-C-methyl-D-erythritol 2-phosphate + ADP + H(+). It participates in isoprenoid biosynthesis; isopentenyl diphosphate biosynthesis via DXP pathway; isopentenyl diphosphate from 1-deoxy-D-xylulose 5-phosphate: step 3/6. Its function is as follows. Catalyzes the phosphorylation of the position 2 hydroxy group of 4-diphosphocytidyl-2C-methyl-D-erythritol. This is 4-diphosphocytidyl-2-C-methyl-D-erythritol kinase from Caldicellulosiruptor saccharolyticus (strain ATCC 43494 / DSM 8903 / Tp8T 6331).